We begin with the raw amino-acid sequence, 592 residues long: Beta-fructofuranosidase, insoluble isoenzyme 1 (592 aa).

Positions 1–39 (MGVTIRNRNYDHGSLPFLQSLLAILLVTTTTLHINGVEA) are cleaved as a signal peptide. The propeptide occupies 40 to 48 (FHEIHYNLQ). Asp-74 is an active-site residue. N-linked (GlcNAc...) (complex) asparagine glycosylation is present at Asn-170. Asn-195 carries N-linked (GlcNAc...) asparagine glycosylation. Asn-311 is a glycosylation site (N-linked (GlcNAc...) (complex) asparagine). The N-linked (GlcNAc...) (high mannose) asparagine glycan is linked to Asn-348. Asn-570 carries an N-linked (GlcNAc...) asparagine glycan.

The protein belongs to the glycosyl hydrolase 32 family. As to expression, in leaves and roots of young plants.

The protein localises to the secreted. Its subcellular location is the cell wall. It catalyses the reaction Hydrolysis of terminal non-reducing beta-D-fructofuranoside residues in beta-D-fructofuranosides.. Its function is as follows. May play an important role in phloem unloading and in stress response. The sequence is that of Beta-fructofuranosidase, insoluble isoenzyme 1 (INV1) from Daucus carota (Wild carrot).